The sequence spans 464 residues: Asparagine--tRNA ligase (464 aa).

Belongs to the class-II aminoacyl-tRNA synthetase family. As to quaternary structure, homodimer.

It is found in the cytoplasm. The enzyme catalyses tRNA(Asn) + L-asparagine + ATP = L-asparaginyl-tRNA(Asn) + AMP + diphosphate + H(+). In Clostridium botulinum (strain Alaska E43 / Type E3), this protein is Asparagine--tRNA ligase.